Consider the following 379-residue polypeptide: CCN family member 1 (379 aa).

A signal peptide spans Met1–Ser24. The region spanning Thr25–Gln94 is the IGFBP N-terminal domain. Cystine bridges form between Cys26/Cys50, Cys30/Cys52, Cys32/Cys53, Cys39/Cys56, Cys64/Cys78, and Cys70/Cys91. Positions Arg98–Asp164 constitute a VWFC domain. Phosphoserine is present on Ser184. Residues Lys226–Gly271 enclose the TSP type-1 domain. Residues Ser277–Gly313 form a heparin-binding region. 5 disulfides stabilise this stretch: Cys284–Cys321, Cys301–Cys335, Cys312–Cys351, Cys315–Cys353, and Cys320–Cys357. The CTCK domain occupies Cys284 to Pro358.

Belongs to the CCN family. As to quaternary structure, interaction with integrins is heparin- and cell-type-dependent and promotes cell adhesion.

The protein resides in the secreted. Functionally, promotes cell proliferation, chemotaxis, angiogenesis and cell adhesion. Appears to play a role in wound healing by up-regulating, in skin fibroblasts, the expression of a number of genes involved in angiogenesis, inflammation and matrix remodeling including VEGA-A, VEGA-C, MMP1, MMP3, TIMP1, uPA, PAI-1 and integrins alpha-3 and alpha-5. CCN1-mediated gene regulation is dependent on heparin-binding. Down-regulates the expression of alpha-1 and alpha-2 subunits of collagen type-1. Promotes cell adhesion and adhesive signaling through integrin alpha-6/beta-1, cell migration through integrin alpha-1/beta-5 and cell proliferation through integrin alpha-v/beta-3. This chain is CCN family member 1, found in Rattus norvegicus (Rat).